We begin with the raw amino-acid sequence, 561 residues long: Embryonal Fyn-associated substrate (561 aa).

The SH3 domain maps to 5–68; that stretch reads TSTQLARALY…PANRVKLLPA (64 aa). Disordered stretches follow at residues 68 to 123, 171 to 215, 240 to 372, and 390 to 422; these read AGPA…CPPS, HPLT…PGPP, LADG…HNEY, and DKAQGSRPPDQACTGDPELPERGMPAPQEALSP. Residues 103 to 123 show a composition bias toward pro residues; that stretch reads VPPPARPCPTSGPPAGPCPPS. A Phosphotyrosine; by SRC modification is found at Tyr253. Short sequence motifs (SH3-binding) lie at residues 305–311 and 335–341; these read RPLPALP and RPLPPPP. The span at 308-325 shows a compositional bias: pro residues; that stretch reads PALPVPEAPSPSPVPSPA. Residues 352–372 show a composition bias toward basic and acidic residues; that stretch reads VEGDPEGREMEDDPAGHHNEY. Residues 438-488 are divergent helix-loop-helix motif; it reads FYAGQCQSHYSALQAAVAALMSSTQANQPPRLFVPHSKRVVVAAHRLVFVG.

It belongs to the CAS family. Phosphorylated on multiple tyrosine residues. Phosphorylated on tyrosines by FYN and SRC. As to expression, the protein has been detected in lung and placenta.

Functionally, docking protein which plays a central coordinating role for tyrosine-kinase-based signaling related to cell adhesion. May serve as an activator of SRC and a downstream effector. Interacts with the SH3 domain of FYN and with CRK, SRC, and YES. The chain is Embryonal Fyn-associated substrate (EFS) from Homo sapiens (Human).